We begin with the raw amino-acid sequence, 210 residues long: Thymidylate kinase (210 aa).

11-18 lines the ATP pocket; it reads GVDGSGKS.

The protein belongs to the thymidylate kinase family.

It catalyses the reaction dTMP + ATP = dTDP + ADP. Phosphorylation of dTMP to form dTDP in both de novo and salvage pathways of dTTP synthesis. This is Thymidylate kinase from Mycoplasmoides gallisepticum (strain R(low / passage 15 / clone 2)) (Mycoplasma gallisepticum).